A 113-amino-acid chain; its full sequence is U11-theraphotoxin-Hhn1h (113 aa).

The signal sequence occupies residues 1–21 (MNTVRVTFLLVFVLVVSLGQA). Positions 22–74 (DKDENRMEMQEKTEQGKSYLDFAENLLLQKLEELEAKLLEEDSEESRNSRQKR) are excised as a propeptide. Residues 61–83 (EEDSEESRNSRQKRRIGEGVPCD) form a disordered region. 2 cysteine pairs are disulfide-bonded: Cys-82–Cys-95 and Cys-89–Cys-110.

Belongs to the neurotoxin 14 (magi-1) family. 01 (HNTX-16) subfamily. Expressed by the venom gland.

It is found in the secreted. Functionally, probable ion channel inhibitor. The chain is U11-theraphotoxin-Hhn1h from Cyriopagopus hainanus (Chinese bird spider).